We begin with the raw amino-acid sequence, 82 residues long: DNA-directed RNA polymerase subunit Rpo5 (82 aa).

Belongs to the archaeal Rpo5/eukaryotic RPB5 RNA polymerase subunit family. In terms of assembly, part of the RNA polymerase complex.

The protein localises to the cytoplasm. The enzyme catalyses RNA(n) + a ribonucleoside 5'-triphosphate = RNA(n+1) + diphosphate. Its function is as follows. DNA-dependent RNA polymerase (RNAP) catalyzes the transcription of DNA into RNA using the four ribonucleoside triphosphates as substrates. The polypeptide is DNA-directed RNA polymerase subunit Rpo5 (Thermococcus kodakarensis (strain ATCC BAA-918 / JCM 12380 / KOD1) (Pyrococcus kodakaraensis (strain KOD1))).